The primary structure comprises 60 residues: RICYNHQSTTPATTKSCGENSCYKKTWSDHRGTIIERGCGCPKVKRGVHLHCCQSDKCNN.

4 cysteine pairs are disulfide-bonded: Cys3/Cys22, Cys17/Cys39, Cys41/Cys52, and Cys53/Cys58.

Belongs to the three-finger toxin family. Short-chain subfamily. Type I alpha-neurotoxin sub-subfamily. Expressed by the venom gland.

The protein resides in the secreted. In terms of biological role, binds to muscle nicotinic acetylcholine receptor (nAChR) and inhibit acetylcholine from binding to the receptor, thereby impairing neuromuscular transmission. This is Short neurotoxin 1 from Dendroaspis viridis (Western green mamba).